We begin with the raw amino-acid sequence, 177 residues long: Actinorhodin polyketide dimerase (177 aa).

This sequence to S.pristinaespiralis SnaC.

It functions in the pathway antibiotic biosynthesis; actinorhodin biosynthesis. This chain is Actinorhodin polyketide dimerase (actVB), found in Streptomyces coelicolor (strain ATCC BAA-471 / A3(2) / M145).